The chain runs to 496 residues: Lysine--tRNA ligase (496 aa).

Mg(2+) contacts are provided by Glu-409 and Glu-416.

This sequence belongs to the class-II aminoacyl-tRNA synthetase family. As to quaternary structure, homodimer. Requires Mg(2+) as cofactor.

The protein resides in the cytoplasm. The catalysed reaction is tRNA(Lys) + L-lysine + ATP = L-lysyl-tRNA(Lys) + AMP + diphosphate. The protein is Lysine--tRNA ligase of Streptococcus pneumoniae (strain CGSP14).